Reading from the N-terminus, the 250-residue chain is Ubiquinone/menaquinone biosynthesis C-methyltransferase UbiE (250 aa).

S-adenosyl-L-methionine-binding positions include threonine 74, aspartate 94, 122-123 (DA), and serine 139.

Belongs to the class I-like SAM-binding methyltransferase superfamily. MenG/UbiE family.

The catalysed reaction is a 2-demethylmenaquinol + S-adenosyl-L-methionine = a menaquinol + S-adenosyl-L-homocysteine + H(+). The enzyme catalyses a 2-methoxy-6-(all-trans-polyprenyl)benzene-1,4-diol + S-adenosyl-L-methionine = a 5-methoxy-2-methyl-3-(all-trans-polyprenyl)benzene-1,4-diol + S-adenosyl-L-homocysteine + H(+). Its pathway is quinol/quinone metabolism; menaquinone biosynthesis; menaquinol from 1,4-dihydroxy-2-naphthoate: step 2/2. It functions in the pathway cofactor biosynthesis; ubiquinone biosynthesis. Functionally, methyltransferase required for the conversion of demethylmenaquinol (DMKH2) to menaquinol (MKH2) and the conversion of 2-polyprenyl-6-methoxy-1,4-benzoquinol (DDMQH2) to 2-polyprenyl-3-methyl-6-methoxy-1,4-benzoquinol (DMQH2). The sequence is that of Ubiquinone/menaquinone biosynthesis C-methyltransferase UbiE from Dinoroseobacter shibae (strain DSM 16493 / NCIMB 14021 / DFL 12).